A 137-amino-acid polypeptide reads, in one-letter code: MRKLIYIIVGIAGILGALSRYYLGLTIHEFWHHTFPLATLLINLAGCFLLAWLTTYIAKLNILPSDVITGIGTGFIGSFTTFSTLSVETIQLINHSEWGIAFLYVSCSILGGLIMSGLGYTLGDFLLKKHLTEGDHL.

The next 4 helical transmembrane spans lie at 4–24 (LIYIIVGIAGILGALSRYYLG), 37–57 (LATLLINLAGCFLLAWLTTYI), 67–87 (VITGIGTGFIGSFTTFSTLSV), and 98–118 (WGIAFLYVSCSILGGLIMSGL). 2 residues coordinate Na(+): Gly77 and Thr80.

It belongs to the fluoride channel Fluc/FEX (TC 1.A.43) family.

The protein localises to the cell membrane. The enzyme catalyses fluoride(in) = fluoride(out). Its activity is regulated as follows. Na(+) is not transported, but it plays an essential structural role and its presence is essential for fluoride channel function. Its function is as follows. Fluoride-specific ion channel. Important for reducing fluoride concentration in the cell, thus reducing its toxicity. This Bacillus anthracis protein is Fluoride-specific ion channel FluC 1.